We begin with the raw amino-acid sequence, 183 residues long: Pyruvoyl-dependent arginine decarboxylase (183 aa).

A Pyruvic acid (Ser) modification is found at Ser-44.

The protein belongs to the PdaD family. The cofactor is pyruvate.

The catalysed reaction is L-arginine + H(+) = agmatine + CO2. The sequence is that of Pyruvoyl-dependent arginine decarboxylase from Nitrosopumilus maritimus (strain SCM1).